Reading from the N-terminus, the 306-residue chain is Transcription factor MYBS1 (306 aa).

Residues 18-73 (WTREDDKAFENALAACAAPPPADGGAPDDDWFAALAASVPGARSAEEVRRHYEALV) form the Myb-like domain. The Nuclear export signal 1 signature appears at 72 to 86 (LVEDVAAIDAGRVPL). The interval 89 to 142 (YAGEESAAPPDGAGAAAAASKDGGHRRDERKGGGGGYDGGKSCSKAEQERRKGI) is disordered. The segment covering 92–109 (EESAAPPDGAGAAAAASK) has biased composition (low complexity). 2 stretches are compositionally biased toward basic and acidic residues: residues 110-120 (DGGHRRDERKG) and 132-142 (SKAEQERRKGI). Residues 133–140 (KAEQERRK) carry the Nuclear localization signal 1 motif. The HTH myb-type domain maps to 136 to 192 (QERRKGIPWTEEEHRLFLLGLDKFGKGDWRSISRNFVISRTPTQVASHAQKYFIRLN). A DNA-binding region (H-T-H motif) is located at residues 164 to 188 (WRSISRNFVISRTPTQVASHAQKYF). Positions 196–200 (RDRRR) match the Nuclear localization signal 2 motif. Positions 203 to 215 (IHDITSVTAGDQV) match the Nuclear export signal 2 motif. A compositionally biased stretch (low complexity) spans 228 to 241 (ATGNPAAAALGPPG). Residues 228 to 255 (ATGNPAAAALGPPGMKHHHHHHPGGAPP) form a disordered region.

In terms of assembly, homodimer. Interacts with GAMYB. In terms of tissue distribution, expressed in aboveground tissues, with the highest level in leaves.

The protein localises to the nucleus. It localises to the cytoplasm. Its function is as follows. Transcription activator that binds to 5'-TATCCA-3' elements in gene promoters. Derepresses strongly the sugar-repressed transcription of promoters containing SRS or 5'-TATCCA-3' elements. Functions with GAMYB to integrate diverse nutrient starvation and gibberellin (GA) signaling pathways during germination of grains. Sugar, nitrogen and phosphate starvation signals converge and interconnect with GA to promote the co-nuclear import of MYBS1 and GAMYB, resulting in the expression of a large set of GA-inducible hydrolases, transporters, and regulators that are essential for mobilization of nutrient reserves in the endosperm to support seedling growth. This chain is Transcription factor MYBS1, found in Oryza sativa subsp. japonica (Rice).